The sequence spans 232 residues: uncharacterized protein (232 aa).

The chain crosses the membrane as a helical span at residues 10 to 32; that stretch reads GLTIYLYPVIAWIILVTKIESGL.

The protein resides in the membrane. This is an uncharacterized protein from Archaeoglobus fulgidus (strain ATCC 49558 / DSM 4304 / JCM 9628 / NBRC 100126 / VC-16).